Here is a 459-residue protein sequence, read N- to C-terminus: MAATTMKASFPLLMLMGISFLASVCVSSRSDPQNPFIFKSNKFQTLFENENGHIRLLQKFDQRSKIFENLQNYRLLEYKSKPHTIFLPQHTDADYILVVLSGKAILTVLKPDDRNSFNLERGDTIKLPAGTIAYLVNRDDNEELRVLDLAIPVNRPGQLQSFLLSGNQNQQNYLSGFSKNILEASFNTDYEEIEKVLLEEHEKETQHRRSLKDKRQQSQEENVIVKLSRGQIEELSKNAKSTSKKSVSSESEPFNLRSRGPIYSNEFGKFFEITPEKNPQLQDLDIFVNSVEIKEGSLLLPHYNSRAIVIVTVNEGKGDFELVGQRNENQQEQRKEDDEEEEQGEEEINKQVQNYKAKLSSGDVFVIPAGHPVAVKASSNLDLLGFGINAENNQRNFLAGDEDNVISQIQRPVKELAFPGSAQEVDRILENQKQSHFADAQPQQRERGSRETRDRLSSV.

Residues 1 to 28 (MAATTMKASFPLLMLMGISFLASVCVSS) form the signal peptide. In terms of domain architecture, Cupin type-1 1 spans 36-194 (FIFKSNKFQT…SFNTDYEEIE (159 aa)). Disordered regions lie at residues 235-258 (LSKNAKSTSKKSVSSESEPFNLRS), 321-346 (ELVGQRNENQQEQRKEDDEEEEQGEE), and 430-459 (ENQKQSHFADAQPQQRERGSRETRDRLSSV). The span at 238–251 (NAKSTSKKSVSSES) shows a compositional bias: low complexity. The 173-residue stretch at 254–426 (FNLRSRGPIY…AFPGSAQEVD (173 aa)) folds into the Cupin type-1 2 domain. The segment covering 337-346 (DDEEEEQGEE) has biased composition (acidic residues). Positions 444 to 459 (QRERGSRETRDRLSSV) are enriched in basic and acidic residues.

It belongs to the 7S seed storage protein family.

Its subcellular location is the vacuole. The protein resides in the aleurone grain. Seed storage protein. The sequence is that of Vicilin from Pisum sativum (Garden pea).